Here is a 223-residue protein sequence, read N- to C-terminus: Cutinase 4 (223 aa).

An N-terminal signal peptide occupies residues 1–26; the sequence is MPLPLLPPLLLPLEALLDLALHLVDS. C60 and C133 are joined by a disulfide. S144 (nucleophile) is an active-site residue. C187 and C194 are oxidised to a cystine. The active site involves D191. H203 (proton donor/acceptor) is an active-site residue.

This sequence belongs to the cutinase family. In terms of processing, the 2 disulfide bonds play a critical role in holding the catalytic residues in juxta-position; reduction of the disulfide bridges results in the complete inactivation of the enzyme.

It is found in the secreted. The catalysed reaction is cutin + H2O = cutin monomers.. Its function is as follows. Catalyzes the hydrolysis of complex carboxylic polyesters found in the cell wall of plants. Degrades cutin, a macromolecule that forms the structure of the plant cuticle. Also degrades suberin, a specialized macromolecule found in the cell wall of various plant tissues. This Emericella nidulans (strain FGSC A4 / ATCC 38163 / CBS 112.46 / NRRL 194 / M139) (Aspergillus nidulans) protein is Cutinase 4.